The primary structure comprises 933 residues: Neuronal PAS domain-containing protein 4A (933 aa).

Residues 1-13 (MYRSTKGASKARR) form a basic motif; degenerate region. In terms of domain architecture, bHLH spans 1–53 (MYRSTKGASKARRDQINAEIRNLKDLLPISDADKSRLSYLHIMSLACMYTRKS). Residues 14–53 (DQINAEIRNLKDLLPISDADKSRLSYLHIMSLACMYTRKS) form a helix-loop-helix motif region. PAS domains are found at residues 74–148 (SFYE…PDTD) and 220–290 (TSAS…LREG). A PAC domain is found at 295–334 (AEMVVRVETADHSWVWLYMVLQLETGETPIVSNNYIISET). Polar residues predominate over residues 361–398 (QESVSLQSPETLSSPDQVFTPGSSGLSGQSFDFSTAAC). Disordered regions lie at residues 361-451 (QESV…ASSP), 514-573 (GSNF…LSSL), and 750-776 (DLSSSPPLSPTPSSSSHSSPPSSPSTP). Composition is skewed to low complexity over residues 399-411 (STGSTEEQGGSSS), 440-451 (EPMASPSSASSP), 538-560 (GQTATVTTTTAPSLSPSAPSNPQ), and 751-769 (LSSSPPLSPTPSSSSHSSP).

As to quaternary structure, efficient DNA binding requires dimerization with another bHLH protein. Brain-specific.

It is found in the nucleus. Functionally, transcription factor expressed in neurons of the brain that regulates the excitatory-inhibitory balance within neural circuits and is required for contextual memory in the hippocampus. Plays a key role in the structural and functional plasticity of neurons. Acts as an early-response transcription factor in both excitatory and inhibitory neurons, where it induces distinct but overlapping sets of late-response genes in these two types of neurons, allowing the synapses that form on inhibitory and excitatory neurons to be modified by neuronal activity in a manner specific to their function within a circuit, thereby facilitating appropriate circuit responses to sensory experience. In Danio rerio (Zebrafish), this protein is Neuronal PAS domain-containing protein 4A (npas4a).